A 453-amino-acid polypeptide reads, in one-letter code: Bifunctional protein GlmU (453 aa).

Positions 1–226 are pyrophosphorylase; it reads MKFSAVILAA…AIEVEGVNDR (226 aa). UDP-N-acetyl-alpha-D-glucosamine is bound by residues 8 to 11, Lys-22, Gln-73, 78 to 79, 100 to 102, Gly-137, Glu-151, Asn-166, and Asn-224; these read LAAG, GT, and YGD. Asp-102 provides a ligand contact to Mg(2+). Asn-224 provides a ligand contact to Mg(2+). Residues 227–247 are linker; the sequence is AQLARLERAFQSMQAQKLLEQ. Residues 248-453 form an N-acetyltransferase region; the sequence is GVMLRDPARF…TGWQRPVKQK (206 aa). Arg-330 and Lys-348 together coordinate UDP-N-acetyl-alpha-D-glucosamine. Catalysis depends on His-360, which acts as the Proton acceptor. Residues Tyr-363 and Asn-374 each contribute to the UDP-N-acetyl-alpha-D-glucosamine site. Acetyl-CoA is bound by residues Ala-377, 383–384, Ser-402, Ala-420, and Arg-437; that span reads NY.

It in the N-terminal section; belongs to the N-acetylglucosamine-1-phosphate uridyltransferase family. In the C-terminal section; belongs to the transferase hexapeptide repeat family. In terms of assembly, homotrimer. Mg(2+) serves as cofactor.

The protein localises to the cytoplasm. It carries out the reaction alpha-D-glucosamine 1-phosphate + acetyl-CoA = N-acetyl-alpha-D-glucosamine 1-phosphate + CoA + H(+). The catalysed reaction is N-acetyl-alpha-D-glucosamine 1-phosphate + UTP + H(+) = UDP-N-acetyl-alpha-D-glucosamine + diphosphate. The protein operates within nucleotide-sugar biosynthesis; UDP-N-acetyl-alpha-D-glucosamine biosynthesis; N-acetyl-alpha-D-glucosamine 1-phosphate from alpha-D-glucosamine 6-phosphate (route II): step 2/2. Its pathway is nucleotide-sugar biosynthesis; UDP-N-acetyl-alpha-D-glucosamine biosynthesis; UDP-N-acetyl-alpha-D-glucosamine from N-acetyl-alpha-D-glucosamine 1-phosphate: step 1/1. It participates in bacterial outer membrane biogenesis; LPS lipid A biosynthesis. In terms of biological role, catalyzes the last two sequential reactions in the de novo biosynthetic pathway for UDP-N-acetylglucosamine (UDP-GlcNAc). The C-terminal domain catalyzes the transfer of acetyl group from acetyl coenzyme A to glucosamine-1-phosphate (GlcN-1-P) to produce N-acetylglucosamine-1-phosphate (GlcNAc-1-P), which is converted into UDP-GlcNAc by the transfer of uridine 5-monophosphate (from uridine 5-triphosphate), a reaction catalyzed by the N-terminal domain. The polypeptide is Bifunctional protein GlmU (Vibrio parahaemolyticus serotype O3:K6 (strain RIMD 2210633)).